A 465-amino-acid chain; its full sequence is Ribosomal oxygenase 2 (465 aa).

A JmjC domain is found at 139-271; that stretch reads QPQRFKDELW…NSWGDFLLDT (133 aa). Residues His179, Asp181, and His240 each contribute to the Fe cation site. Residue Ser309 is modified to Phosphoserine.

It belongs to the ROX family. MINA53 subfamily. Fe(2+) is required as a cofactor.

Its subcellular location is the nucleus. It is found in the nucleolus. The catalysed reaction is L-histidyl-[ribosomal protein uL15] + 2-oxoglutarate + O2 = (3S)-3-hydroxy-L-histidyl-[ribosomal protein uL15] + succinate + CO2. It carries out the reaction L-histidyl-[protein] + 2-oxoglutarate + O2 = (3S)-3-hydroxy-L-histidyl-[protein] + succinate + CO2. Oxygenase that can act as both a histone lysine demethylase and a ribosomal histidine hydroxylase. Is involved in the demethylation of trimethylated 'Lys-9' on histone H3 (H3K9me3), leading to an increase in ribosomal RNA expression. Also catalyzes the hydroxylation of 60S ribosomal protein L27a on 'His-39'. May play an important role in cell growth and survival. May be involved in ribosome biogenesis, most likely during the assembly process of pre-ribosomal particles. The polypeptide is Ribosomal oxygenase 2 (RIOX2) (Pongo abelii (Sumatran orangutan)).